Consider the following 294-residue polypeptide: Probable 2-(5''-triphosphoribosyl)-3'-dephosphocoenzyme-A synthase (294 aa).

This sequence belongs to the CitG/MdcB family.

It carries out the reaction 3'-dephospho-CoA + ATP = 2'-(5''-triphospho-alpha-D-ribosyl)-3'-dephospho-CoA + adenine. The sequence is that of Probable 2-(5''-triphosphoribosyl)-3'-dephosphocoenzyme-A synthase from Streptococcus pyogenes serotype M18 (strain MGAS8232).